A 259-amino-acid chain; its full sequence is 3-deoxy-manno-octulosonate cytidylyltransferase (259 aa).

This sequence belongs to the KdsB family.

Its subcellular location is the cytoplasm. The enzyme catalyses 3-deoxy-alpha-D-manno-oct-2-ulosonate + CTP = CMP-3-deoxy-beta-D-manno-octulosonate + diphosphate. It participates in nucleotide-sugar biosynthesis; CMP-3-deoxy-D-manno-octulosonate biosynthesis; CMP-3-deoxy-D-manno-octulosonate from 3-deoxy-D-manno-octulosonate and CTP: step 1/1. Its pathway is bacterial outer membrane biogenesis; lipopolysaccharide biosynthesis. Activates KDO (a required 8-carbon sugar) for incorporation into bacterial lipopolysaccharide in Gram-negative bacteria. This Aeromonas salmonicida (strain A449) protein is 3-deoxy-manno-octulosonate cytidylyltransferase.